The primary structure comprises 271 residues: MWIDCRTIARSIEERTKERVEKLGFTPKLVSVACTDDPSTLSYLKSQRKKAEKLGIAFEILNVSPEEIVSTLKKLGSDESVNGVFVARPFPPSFDEKEILSSVPVEKDVEGVNPANLGLLLYDEEIFPPCTAEAAVRILERETNLSGKRVTVVGRSVTVGKPLALMLLKKGRDATVTVCHSRTVNLEEITKNSDIVVVAVGRAHFLKKNMVKEGAIVIDVGINYVDGKLQGDVDPSVEEIARVTPVPGGVGQVTTALLFEHVVRAAERQRK.

Residues 154–156, Ser181, and Ile222 contribute to the NADP(+) site; that span reads GRS.

It belongs to the tetrahydrofolate dehydrogenase/cyclohydrolase family. Homodimer.

It catalyses the reaction (6R)-5,10-methylene-5,6,7,8-tetrahydrofolate + NADP(+) = (6R)-5,10-methenyltetrahydrofolate + NADPH. It carries out the reaction (6R)-5,10-methenyltetrahydrofolate + H2O = (6R)-10-formyltetrahydrofolate + H(+). It participates in one-carbon metabolism; tetrahydrofolate interconversion. In terms of biological role, catalyzes the oxidation of 5,10-methylenetetrahydrofolate to 5,10-methenyltetrahydrofolate and then the hydrolysis of 5,10-methenyltetrahydrofolate to 10-formyltetrahydrofolate. The polypeptide is Bifunctional protein FolD (Thermotoga petrophila (strain ATCC BAA-488 / DSM 13995 / JCM 10881 / RKU-1)).